The following is an 895-amino-acid chain: MISRTYVINLARRPDKKDRILAEFLKLKEKGVELNCVIFEAVDGNNPEHLSRFNFKIPNWTDLNSGKPMTNGEVGCALSHWSVWKDVVDCVENGTLDKDCRILVLEDDVVFLDNFMERYQTYTSEITYNCDLLYLHRKPLNPYTETKISTHIVKPNKSYWACAYVITYQCAKKFMNANYLENLIPSDEFIPIMHGCNVYGFEKLFSNCEKIDCYAVQPSLVKLTSNAFNDSETFHSGSYVPSNKFNFDTDKQFRIVYIGPTKGNSFHRFTEYCKLYLLPYKVIDEKETNDFVSLRSELQSLSEQDLNTTLMLVVSVNHNDFCNTIPCAPTNEFIDKYKQLTTDTNSIVSAVQNGTNKTMFIGWANKISEFINHYHQKLTESNAETDINLANLLLISSISSDFNCVVEDVEGNLFQLINEESDIVFSTTTSRVNNKLGKTPSVLYANSDSSVIVLNKVENYTGYGWNEYYGYHVYPVKFDVLPKIYLSIRIVKNANVTKIAETLDYPKELITVSISRSEHDSFYQADIQKFLLSGADYYFYISGDCIITRPTILKELLELNKDFVGPLMRKGTESWTNYWGDIDPSNGYYKRSFDYFDIIGRDRVGCWNVPYLASVYLIKKSVIEQVPNLFTENSHMWNGSNIDMRLCHNLRKNNVFMYLSNLRPYGHIDDSINLEVLSGVPTEVTLYDLPTRKEEWEKKYLHPEFLSHLQNFKDFDYTEICNDVYSFPLFTPAFCKEVIEVMDKANLWSKGGDSYFDPRIGGVESYPTQDTQLYEVGLDKQWHYVVFNYVAPFVRHLYNNYKTKDINLAFVVKYDMERQSELAPHHDSSTYTLNIALNEYGKEYTAGGCEFIRHKFIWQGQKVGYATIHAGKLLAYHRALPITSGKRYILVSFVN.

Residues 1-194 (MISRTYVINL…PSDEFIPIMH (194 aa)) are lysyl hydroxylase region. The interval 537–895 (YYFYISGDCI…KRYILVSFVN (359 aa)) is glucosyl transferase region. Positions 805 to 895 (DINLAFVVKY…KRYILVSFVN (91 aa)) constitute a Fe2OG dioxygenase domain. Residues His-825, Asp-827, and His-877 each coordinate Fe cation. Arg-887 is an active-site residue.

Requires Fe cation as cofactor. It depends on L-ascorbate as a cofactor.

The enzyme catalyses L-lysyl-[collagen] + 2-oxoglutarate + O2 = (5R)-5-hydroxy-L-lysyl-[collagen] + succinate + CO2. In terms of biological role, displays two enzymatic activities involved in procollagen processing. Forms hydroxylysine residues in -Xaa-Lys-Gly- sequences in collagens. These hydroxylysines are subsequentially glucosylated by a glucosyltransferase activity. Collagen post-translationally modified is detected in mimivirus virion. The sequence is that of Procollagen lysyl hydroxylase and glycosyltransferase from Acanthamoeba polyphaga (Amoeba).